Consider the following 502-residue polypeptide: Xylulose kinase (502 aa).

Residue 82 to 83 (MH) participates in substrate binding. Catalysis depends on Asp-240, which acts as the Proton acceptor.

It belongs to the FGGY kinase family.

The catalysed reaction is D-xylulose + ATP = D-xylulose 5-phosphate + ADP + H(+). In terms of biological role, catalyzes the phosphorylation of D-xylulose to D-xylulose 5-phosphate. This chain is Xylulose kinase, found in Levilactobacillus brevis (Lactobacillus brevis).